Consider the following 61-residue polypeptide: uncharacterized protein (61 aa).

The segment at 39–61 (PRPFTPGLADPRRLGPRRVQAAQ) is disordered.

This is an uncharacterized protein from Pan troglodytes (Chimpanzee).